A 247-amino-acid chain; its full sequence is Probable transcriptional regulatory protein lpp1249 (247 aa).

Belongs to the TACO1 family.

Its subcellular location is the cytoplasm. The polypeptide is Probable transcriptional regulatory protein lpp1249 (Legionella pneumophila (strain Paris)).